Consider the following 388-residue polypeptide: G2/mitotic-specific cyclin-B (388 aa).

This sequence belongs to the cyclin family. Cyclin AB subfamily. Interacts with the CDK1 protein kinase to form a serine/threonine kinase holoenzyme complex also known as maturation promoting factor (MPF). The cyclin subunit imparts substrate specificity to the complex.

Its function is as follows. Essential for the control of the cell cycle at the G2/M (mitosis) transition. This Marthasterias glacialis (Spiny starfish) protein is G2/mitotic-specific cyclin-B.